The sequence spans 159 residues: uncharacterized protein (159 aa).

Residues 1 to 13 are compositionally biased toward polar residues; the sequence is MTQPTRPSVTCDQ. The interval 1–57 is disordered; that stretch reads MTQPTRPSVTCDQGSSTIGGTAAQATTSSSATSGSNYQRDRLGRRPEIGVGGQPQIC. The segment covering 14–35 has biased composition (low complexity); the sequence is GSSTIGGTAAQATTSSSATSGS. A compositionally biased stretch (basic and acidic residues) spans 38 to 47; it reads QRDRLGRRPE.

This is an uncharacterized protein from Homo sapiens (Human).